The primary structure comprises 103 residues: Matrix Gla protein (103 aa).

An N-terminal signal peptide occupies residues Met-1–Cys-19. 4-carboxyglutamate is present on Glu-21. Phosphoserine is present on residues Ser-22, Ser-25, and Ser-28. One can recognise a Gla domain in the interval His-51 to Arg-97. Residues Glu-56, Glu-60, Glu-67, and Glu-71 each carry the 4-carboxyglutamate modification. Cysteines 73 and 79 form a disulfide.

It belongs to the osteocalcin/matrix Gla protein family. Post-translationally, requires vitamin K-dependent gamma-carboxylation for its function.

Its subcellular location is the secreted. Associates with the organic matrix of bone and cartilage. Thought to act as an inhibitor of bone formation. The sequence is that of Matrix Gla protein (Mgp) from Rattus norvegicus (Rat).